A 505-amino-acid chain; its full sequence is Maturase K (505 aa).

Belongs to the intron maturase 2 family. MatK subfamily.

Its subcellular location is the plastid. The protein localises to the chloroplast. Functionally, usually encoded in the trnK tRNA gene intron. Probably assists in splicing its own and other chloroplast group II introns. The polypeptide is Maturase K (Coffea arabica (Arabian coffee)).